Consider the following 342-residue polypeptide: MNTETFSTPPHTLVIASRESRLAMWQAEHVRCALHKLYPSCDVKILGMTTRGDQILDRTLSKVGGKGLFVKELEAALADGRADLAVHSLKDVPMELPAGFALSTIMEREDPRDALVSNDYDSLAALPAGAVVGTSSLRREAMLRMRYPHLEVRPLRGNLDTRLSKLDRGDYAAIILAAAGLKRLGLGERIRALLDPEDSLPAAGQGALGIEIRADRADLAAWLAPLHHDHTAAAVEAERMVSRALGGSCEVPLAAYATWRDGALHLRGIVATPDGQRVLSAQASAPAPSVERAVALGQEVASALEQQGAMDIVRALSAASGPAAAKQGAAEDGAADSAATGE.

At C249 the chain carries S-(dipyrrolylmethanemethyl)cysteine. Positions 323 to 342 are disordered; the sequence is AAAKQGAAEDGAADSAATGE.

This sequence belongs to the HMBS family. Monomer. It depends on dipyrromethane as a cofactor.

It catalyses the reaction 4 porphobilinogen + H2O = hydroxymethylbilane + 4 NH4(+). It functions in the pathway porphyrin-containing compound metabolism; protoporphyrin-IX biosynthesis; coproporphyrinogen-III from 5-aminolevulinate: step 2/4. Its function is as follows. Tetrapolymerization of the monopyrrole PBG into the hydroxymethylbilane pre-uroporphyrinogen in several discrete steps. This is Porphobilinogen deaminase from Paraburkholderia phytofirmans (strain DSM 17436 / LMG 22146 / PsJN) (Burkholderia phytofirmans).